The chain runs to 344 residues: Mitochondrial mRNA pseudouridine synthase RPUSD3 (344 aa).

A mitochondrion-targeting transit peptide spans 1–41; it reads MGGWRVLGQASGGWRRGLGIRATSTAAGFGTKARHQLQRRG. The segment at 29-59 is disordered; it reads FGTKARHQLQRRGASKPSDPPGDQPFPGLLR. The span at 32–42 shows a compositional bias: basic residues; it reads KARHQLQRRGA. Position 64 is a phosphoserine (S64).

Belongs to the pseudouridine synthase RluA family. Forms a regulatory protein-RNA complex, consisting of RCC1L, NGRN, RPUSD3, RPUSD4, TRUB2, FASTKD2 and 16S mt-rRNA.

Its subcellular location is the mitochondrion matrix. The catalysed reaction is a uridine in mRNA = a pseudouridine in mRNA. Functionally, catalyzes uridine to pseudouridine isomerization (pseudouridylation) of specific mitochondrial mRNAs (mt-mRNAs), a post-transcriptional modification necessary for their translation. Acts at position 390 in COXI mt-mRNA and at position 697-699 in mitochondrial COXIII mt-mRNA. As a component of a functional protein-RNA module, consisting of RCC1L, NGRN, RPUSD3, RPUSD4, TRUB2, FASTKD2 and 16S mitochondrial ribosomal RNA (16S mt-rRNA), controls 16S mt-rRNA abundance and may play a role in mitochondrial ribosome biogenesis. In Bos taurus (Bovine), this protein is Mitochondrial mRNA pseudouridine synthase RPUSD3 (RPUSD3).